Here is a 190-residue protein sequence, read N- to C-terminus: Potassium-transporting ATPase KdpC subunit (190 aa).

A helical transmembrane segment spans residues 10-30 (TFLFLLLITGGVYPLLTTALG).

The protein belongs to the KdpC family. As to quaternary structure, the system is composed of three essential subunits: KdpA, KdpB and KdpC.

It is found in the cell inner membrane. Functionally, part of the high-affinity ATP-driven potassium transport (or Kdp) system, which catalyzes the hydrolysis of ATP coupled with the electrogenic transport of potassium into the cytoplasm. This subunit acts as a catalytic chaperone that increases the ATP-binding affinity of the ATP-hydrolyzing subunit KdpB by the formation of a transient KdpB/KdpC/ATP ternary complex. The sequence is that of Potassium-transporting ATPase KdpC subunit from Escherichia coli O45:K1 (strain S88 / ExPEC).